We begin with the raw amino-acid sequence, 354 residues long: D-alanine--D-alanine ligase (354 aa).

Residues 154 to 348 (RSWFLTNNIN…FTNLIEEIIK (195 aa)) enclose the ATP-grasp domain. Residue 181–232 (MKRPYVIKPITQGSSIGIEVIFEEDDFNFANYDFPYGDQVIIEKYIKGRELQ) participates in ATP binding. Mg(2+)-binding residues include Glu301, Glu315, and Asn317.

The protein belongs to the D-alanine--D-alanine ligase family. The cofactor is Mg(2+). Mn(2+) serves as cofactor.

The protein resides in the cytoplasm. It catalyses the reaction 2 D-alanine + ATP = D-alanyl-D-alanine + ADP + phosphate + H(+). The protein operates within cell wall biogenesis; peptidoglycan biosynthesis. In terms of biological role, cell wall formation. This Rickettsia canadensis (strain McKiel) protein is D-alanine--D-alanine ligase.